Reading from the N-terminus, the 165-residue chain is UPF0763 protein NIS_0363 (165 aa).

Belongs to the UPF0763 family.

The sequence is that of UPF0763 protein NIS_0363 from Nitratiruptor sp. (strain SB155-2).